The primary structure comprises 190 residues: Cathelicidin-3 (190 aa).

Positions 1–29 are cleaved as a signal peptide; that stretch reads METQMASPSLGRCSLWLLLLGLLLPSASA. Residue Gln30 is modified to Pyrrolidone carboxylic acid. A propeptide spanning residues 30 to 130 is cleaved from the precursor; it reads QALSYREAVL…DLNCNELQSV (101 aa). Cystine bridges form between Cys85/Cys96 and Cys107/Cys124. Over residues 133-151 the composition is skewed to basic residues; that stretch reads LRPRRPRLPRPRPRPRPRP. The segment at 133–190 is disordered; the sequence is LRPRRPRLPRPRPRPRPRPRSLPLPRPQPRRIPRPILLPWRPPRPIPRPQPQPIPRWL. Over residues 172–190 the composition is skewed to pro residues; it reads WRPPRPIPRPQPQPIPRWL.

Belongs to the cathelicidin family.

It is found in the secreted. Exerts, in vitro, a potent antimicrobial activity. Probably due to an impairment of the function of the respiratory chain and of energy-dependent activities in the inner membrane of susceptible microorganisms. The chain is Cathelicidin-3 (CATHL3) from Ovis aries (Sheep).